The primary structure comprises 330 residues: Aspartate--ammonia ligase (330 aa).

It belongs to the class-II aminoacyl-tRNA synthetase family. AsnA subfamily.

The protein resides in the cytoplasm. The catalysed reaction is L-aspartate + NH4(+) + ATP = L-asparagine + AMP + diphosphate + H(+). It functions in the pathway amino-acid biosynthesis; L-asparagine biosynthesis; L-asparagine from L-aspartate (ammonia route): step 1/1. This Glaesserella parasuis serovar 5 (strain SH0165) (Haemophilus parasuis) protein is Aspartate--ammonia ligase.